The primary structure comprises 97 residues: Large ribosomal subunit protein eL21 (97 aa).

The disordered stretch occupies residues 1–24 (MQKSEGFRSKTRYKLQKHPRQKGM). A compositionally biased stretch (basic residues) spans 9-21 (SKTRYKLQKHPRQ).

This sequence belongs to the eukaryotic ribosomal protein eL21 family.

The chain is Large ribosomal subunit protein eL21 from Methanococcus maripaludis (strain DSM 14266 / JCM 13030 / NBRC 101832 / S2 / LL).